The primary structure comprises 305 residues: tRNA dimethylallyltransferase (305 aa).

11–18 (GPTAVGKT) is a binding site for ATP. Residue 13–18 (TAVGKT) coordinates substrate. An interaction with substrate tRNA region spans residues 36–39 (DSMQ).

The protein belongs to the IPP transferase family. Monomer. It depends on Mg(2+) as a cofactor.

The catalysed reaction is adenosine(37) in tRNA + dimethylallyl diphosphate = N(6)-dimethylallyladenosine(37) in tRNA + diphosphate. In terms of biological role, catalyzes the transfer of a dimethylallyl group onto the adenine at position 37 in tRNAs that read codons beginning with uridine, leading to the formation of N6-(dimethylallyl)adenosine (i(6)A). In Listeria monocytogenes serotype 4b (strain CLIP80459), this protein is tRNA dimethylallyltransferase.